The following is a 593-amino-acid chain: Epidermal growth factor receptor kinase substrate 8-like protein 3 (593 aa).

Residues 28–155 (QHRVEHLMTC…ALEEELEQRP (128 aa)) form the PTB domain. Disordered stretches follow at residues 149–171 (EELEQRPRLGGLQPGQDRWRGPA), 184–239 (LEPG…ERDE), and 374–451 (ADWT…PAQP). S231 bears the Phosphoserine mark. The segment covering 386–401 (PTFSDDWQLPEPSSQA) has biased composition (polar residues). Basic and acidic residues predominate over residues 425 to 435 (PQEKTHNHDPQ). The region spanning 450–509 (QPALKMQVLYEFEARNPRELTVVQGEKLEVLDHSKRWWLVKNEAGRSGYIPSNILEPLQP) is the SH3 domain.

Belongs to the EPS8 family. In terms of assembly, interacts with ABI1. Part of a complex that contains SOS1, ABI1 and EPS8L2. Interacts with FASLG.

It localises to the cytoplasm. This chain is Epidermal growth factor receptor kinase substrate 8-like protein 3 (EPS8L3), found in Homo sapiens (Human).